The chain runs to 473 residues: MGVVGALSEVTSASEDALRLLISVLAGYPLAVVHRTFFYNKPAQHQHLFFVIVGLSLWMFNCGSSVIHPILSIFGAFFITNFMAGTDASIYAAHIVFLGHLLIGYWFHETDTYDITWTTPFCIMTLRFIGLVMDVYDGAQKPEHLKPDQKLTAISDKPGLLEIAAFGLFFQGTLVGPQFTLSKFRSFVNGDWLDSDGQPPKSAFLPSIGRFLAGCTYMVLHQWGQFWIPDQYFNSDAYNNLSFFWRWSWVTLWFRLTMYKYCAMWLITEGASILSGLGHNGKDAEGNDRWDGVRDLHIIKWETGHDYNSVVESFNCGTNTFAKNHIHRRLRWVNNKLASHVITLSYLAIWHGYHLGYFLLFGVELGCVQAQNQLYALIKRTPGWSEAISKPISRPFIWIFGKLTISYSMGFAFLMFGLIKTKYWIGPVKSLYFIGFIIYFIVWPILHMVLLRVLPRHPKKAAAEKPEEVKKEL.

The next 4 membrane-spanning stretches (helical) occupy residues L20–N40, A43–G63, V66–T86, and A88–H108. Residues N315 and H351 contribute to the active site. A run of 3 helical transmembrane segments spans residues V341–F361, F396–F416, and L431–L451. Residues K470–L473 carry the Di-lysine motif motif.

It belongs to the membrane-bound acyltransferase family.

Its subcellular location is the endoplasmic reticulum membrane. The catalysed reaction is a 1-acyl-sn-glycero-3-phosphocholine + an acyl-CoA = a 1,2-diacyl-sn-glycero-3-phosphocholine + CoA. It catalyses the reaction a 1-acyl-sn-glycero-3-phospho-L-serine + an acyl-CoA = a 1,2-diacyl-sn-glycero-3-phospho-L-serine + CoA. It carries out the reaction a 1-acyl-sn-glycero-3-phosphoethanolamine + an acyl-CoA = a 1,2-diacyl-sn-glycero-3-phosphoethanolamine + CoA. Its pathway is lipid metabolism; phospholipid metabolism. Probable acyltransferase which may mediate the conversion of lysophosphatidylcholine (1-acyl-sn-glycero-3-phosphocholine or LPC) into phosphatidylcholine (1,2-diacyl-sn-glycero-3-phosphocholine or PC) (LPCAT activity). May also catalyze the conversion of lysophosphatidylethanolamine (1-acyl-2-hydroxy-sn-glycero-3-phosphoethanolamine or LPE) into phosphatidylethanolamine (1,2-diacyl-sn-glycero-3-phosphoethanolamine or PE) (LPEAT activity), as well as the conversion of lysophosphatidylserine (1-acyl-2-hydroxy-sn-glycero-3-phospho-L-serine or LPS) into phosphatidylserine (1,2-diacyl-sn-glycero-3-phospho-L-serine or PS) (LPSAT activity). Required for incorporation of arachidonic acid into PC, PE, and PS. The protein is Lysophospholipid acyltransferase 5 (mboa-6) of Caenorhabditis elegans.